The sequence spans 153 residues: MDLLATTSAVAVSSYALLSTVYKTQALYARPASAAPLRDDPGQAEVALPSVDVIVPSFNEDPNTLSECLASIASQDYAGKLQVHVVDDGSANRDLVGPVHKIFANDPRFRIILLAKNVGKRKAQIAAIRSSSGDLVLNVDSDTILAADVVTKL.

This sequence belongs to the NodC/HAS family.

It localises to the cell membrane. Involved in the synthesis of Nod factor, a sulfated N-acyl-beta-1,4-tetrasaccharide of N-acetylglucosamine which initiates a series of events in the host plant species leading eventually to nodulation. The polypeptide is N-acetylglucosaminyltransferase (nodC) (Bradyrhizobium sp. (strain ANU 289)).